A 309-amino-acid polypeptide reads, in one-letter code: Olfactory receptor 1L8 (309 aa).

The Extracellular segment spans residues 1 to 26; the sequence is MERINHTSSVSEFILLGLSSRPEDQK. N-linked (GlcNAc...) asparagine glycosylation occurs at asparagine 5. The chain crosses the membrane as a helical span at residues 27–50; it reads TLFVLFLIVYLVTITGNLLIILAI. Over 51–58 the chain is Cytoplasmic; that stretch reads RFNPHLQT. The helical transmembrane segment at 59 to 80 threads the bilayer; it reads PMYFFLSFLSLTDICFTTSVVP. The Extracellular segment spans residues 81–101; the sequence is KMLMNFLSEKKTISYAGCLTQ. A disulfide bridge connects residues cysteine 98 and cysteine 190. The helical transmembrane segment at 102–121 threads the bilayer; sequence MYFLYALGNSDSCLLAVMAF. Residues 122-140 are Cytoplasmic-facing; it reads DRYVAVCDPFHYVTTMSHH. The chain crosses the membrane as a helical span at residues 141-159; the sequence is HCVLLVAFSCSFPHLHSLL. Topologically, residues 160–197 are extracellular; that stretch reads HTLLLNRLTFCDSNVIHHFLCDLSPVLKLSCSSIFVNE. A helical transmembrane segment spans residues 198–220; it reads IVQMTEAPIVLVTRFLCIAFSYI. Topologically, residues 221–237 are cytoplasmic; it reads RILTTVLKIPSTSGKRK. The helical transmembrane segment at 238–260 threads the bilayer; that stretch reads AFSTCGFYLTVVTLFYGSIFCVY. At 261–272 the chain is on the extracellular side; that stretch reads LQPPSTYAVKDH. The helical transmembrane segment at 273–292 threads the bilayer; the sequence is VATIVYTVLSSMLNPFIYSL. The Cytoplasmic segment spans residues 293–309; that stretch reads RNKDLKQGLRKLMSKRS.

It belongs to the G-protein coupled receptor 1 family.

It is found in the cell membrane. In terms of biological role, odorant receptor. The chain is Olfactory receptor 1L8 (OR1L8) from Homo sapiens (Human).